Consider the following 332-residue polypeptide: Glycerol-3-phosphate dehydrogenase [NAD(P)+] (332 aa).

Residues W11, R30, and K108 each coordinate NADPH. 3 residues coordinate sn-glycerol 3-phosphate: K108, G137, and S139. A141 is a binding site for NADPH. Sn-glycerol 3-phosphate-binding residues include K192, D245, S255, R256, and N257. K192 (proton acceptor) is an active-site residue. R256 serves as a coordination point for NADPH. 2 residues coordinate NADPH: V280 and E282.

This sequence belongs to the NAD-dependent glycerol-3-phosphate dehydrogenase family.

Its subcellular location is the cytoplasm. It carries out the reaction sn-glycerol 3-phosphate + NAD(+) = dihydroxyacetone phosphate + NADH + H(+). The enzyme catalyses sn-glycerol 3-phosphate + NADP(+) = dihydroxyacetone phosphate + NADPH + H(+). It participates in membrane lipid metabolism; glycerophospholipid metabolism. Functionally, catalyzes the reduction of the glycolytic intermediate dihydroxyacetone phosphate (DHAP) to sn-glycerol 3-phosphate (G3P), the key precursor for phospholipid synthesis. This is Glycerol-3-phosphate dehydrogenase [NAD(P)+] from Burkholderia ambifaria (strain MC40-6).